We begin with the raw amino-acid sequence, 380 residues long: MAHPIRKTHPLLKIINGSFVDLPTPSNISYLWNFGSLLGICLITQIATGLFLAMHYTADTSSAFSSVVHICRDVNYGWLVRNIHANGASFFFICIYLHIGRGLYYGSYMYKETWNIGVILLFLVMATAFVGYVLPWGQMSFWGATVITNLLSAVPYMGDSLVQWIWGGFSVDKATLTRFFAFHFLFPFLIVGASILHLLFLHETGSNNPTGISSNTDKLPFHPYFSYKDTLGFLIMLMMLTLLSMLSPNLLGDPDNFTPANPLVTPPHIQPEWYFLFAYAILRSIPNKLGGVLALLASIMILMLIPMIHTSKQRSLTFRPMTQFLFWLMVSNTLILTWIGGQPVEQPFIEIGQAASILYFLLFIIFMPLSGWWENKLMKW.

Transmembrane regions (helical) follow at residues 34 to 54 (FGSLLGICLITQIATGLFLAM), 78 to 99 (WLVRNIHANGASFFFICIYLHI), 114 to 134 (WNIGVILLFLVMATAFVGYVL), and 179 to 199 (FFAFHFLFPFLIVGASILHLL). Positions 84 and 98 each coordinate heme b. Residues His-183 and His-197 each coordinate heme b. His-202 serves as a coordination point for a ubiquinone. Transmembrane regions (helical) follow at residues 227–247 (YKDTLGFLIMLMMLTLLSMLS), 289–309 (LGGVLALLASIMILMLIPMIH), 321–341 (MTQFLFWLMVSNTLILTWIGG), and 348–368 (FIEIGQAASILYFLLFIIFMP).

The protein belongs to the cytochrome b family. The cytochrome bc1 complex contains 3 respiratory subunits (MT-CYB, CYC1 and UQCRFS1), 2 core proteins (UQCRC1 and UQCRC2) and probably 6 low-molecular weight proteins. It depends on heme b as a cofactor.

The protein localises to the mitochondrion inner membrane. Functionally, component of the ubiquinol-cytochrome c reductase complex (complex III or cytochrome b-c1 complex) that is part of the mitochondrial respiratory chain. The b-c1 complex mediates electron transfer from ubiquinol to cytochrome c. Contributes to the generation of a proton gradient across the mitochondrial membrane that is then used for ATP synthesis. The sequence is that of Cytochrome b (mt-cyb) from Ranodon sibiricus (Siberian salamander).